We begin with the raw amino-acid sequence, 95 residues long: MLHTLMTSPFRCDLSAILRLLAAGDDVLLLQDGVIAALDGSAPLEALLKAPINLYVLKEDLEARGLLAQISPRATVVGYTDFIQLAVRNPQQMAW.

Belongs to the DsrH/TusB family. Heterohexamer, formed by a dimer of trimers. The hexameric TusBCD complex contains 2 copies each of TusB, TusC and TusD. The TusBCD complex interacts with TusE.

The protein resides in the cytoplasm. In terms of biological role, part of a sulfur-relay system required for 2-thiolation of 5-methylaminomethyl-2-thiouridine (mnm(5)s(2)U) at tRNA wobble positions. The chain is Protein TusB from Erwinia tasmaniensis (strain DSM 17950 / CFBP 7177 / CIP 109463 / NCPPB 4357 / Et1/99).